Reading from the N-terminus, the 4662-residue chain is Protein PF3D7_1417600 (4662 aa).

The next 2 membrane-spanning stretches (helical) occupy residues I136–I156 and Y161–I181. Residues I466 to N489 form an LRR 1 repeat. Residues Y583 to E710 are disordered. Residues N590–N644 are compositionally biased toward low complexity. Positions D650 to E666 are enriched in basic and acidic residues. Residues K690–K701 are compositionally biased toward basic residues. The 74-residue stretch at Y783 to F856 folds into the HSA domain. Residues G942–N967 form a disordered region. The LRR 2 repeat unit spans residues N1150–Y1172. Residues N1505–N1524 are compositionally biased toward low complexity. 2 disordered regions span residues N1505–S1540 and K1705–D1761. A compositionally biased stretch (basic and acidic residues) spans N1710–D1761. LRR repeat units lie at residues I2063–K2086 and D2129–D2153. Positions K2228–E2261 are disordered. The segment covering K2230–I2241 has biased composition (basic residues). Acidic residues predominate over residues E2246–E2261. LRR repeat units follow at residues L2672–D2695, N2773–I2796, I2864–N2888, and A2904–S2929. Positions M2956 to N2975 are disordered. LRR repeat units follow at residues Q3377 to M3400, N3438 to S3461, S3756 to N3781, Q3935 to N3960, Q3965 to Q3985, and P3986 to N4010. Residues D4203–Q4272 adopt a coiled-coil conformation. 2 LRR repeats span residues Y4296–K4321 and Q4333–Q4357. The tract at residues Q4384–Q4412 is disordered.

It localises to the membrane. The sequence is that of Protein PF3D7_1417600 from Plasmodium falciparum (isolate 3D7).